Here is a 65-residue protein sequence, read N- to C-terminus: Large ribosomal subunit protein uL29 (65 aa).

This sequence belongs to the universal ribosomal protein uL29 family.

The protein is Large ribosomal subunit protein uL29 of Acinetobacter baylyi (strain ATCC 33305 / BD413 / ADP1).